The following is a 331-amino-acid chain: Aflatoxin B1 aldehyde reductase member 4 (331 aa).

Position 44 (Asp-44) interacts with NADP(+). The active-site Proton donor is Tyr-49. At Ser-85 the chain carries Phosphoserine. His-113 is a substrate binding site. NADP(+) contacts are provided by residues 143–144 (SN), Gln-169, 198–208 (NPLAGGLLTGK), and Arg-222. Tyr-232 contacts substrate. Residue 290-298 (SSLEQLEQN) participates in NADP(+) binding.

This sequence belongs to the aldo/keto reductase family. Aldo/keto reductase 2 subfamily. As to expression, mainly expressed in uterus.

Functionally, can reduce the dialdehyde protein-binding form of aflatoxin B1 (AFB1) to the non-binding AFB1 dialcohol. May be involved in protection of liver against the toxic and carcinogenic effects of AFB1, a potent hepatocarcinogen. This chain is Aflatoxin B1 aldehyde reductase member 4 (AKR7L), found in Homo sapiens (Human).